We begin with the raw amino-acid sequence, 176 residues long: MFHATTIVAVKKGESVAIAGDGQVTFSQNMIMKSTAKKVRKLYNGKVLVGFAGSVADAITLCEKFEEKLEQNSGNLQKSVVELAKEWRQDKVLRRLEALMVVADKDHLFVVSGSGEVVEPDDNIAAIGSGGPYALAAARALLQSTDLSAAEIARKALEIAASICVYTNNNITVLEL.

Thr-5 is a catalytic residue. Ala-161, Cys-164, and Thr-167 together coordinate Na(+).

Belongs to the peptidase T1B family. HslV subfamily. As to quaternary structure, a double ring-shaped homohexamer of HslV is capped on each side by a ring-shaped HslU homohexamer. The assembly of the HslU/HslV complex is dependent on binding of ATP.

It localises to the cytoplasm. The catalysed reaction is ATP-dependent cleavage of peptide bonds with broad specificity.. With respect to regulation, allosterically activated by HslU binding. In terms of biological role, protease subunit of a proteasome-like degradation complex believed to be a general protein degrading machinery. The sequence is that of ATP-dependent protease subunit HslV from Caldicellulosiruptor bescii (strain ATCC BAA-1888 / DSM 6725 / KCTC 15123 / Z-1320) (Anaerocellum thermophilum).